A 284-amino-acid chain; its full sequence is UPF0276 protein Ping_0944 (284 aa).

Belongs to the UPF0276 family.

The polypeptide is UPF0276 protein Ping_0944 (Psychromonas ingrahamii (strain DSM 17664 / CCUG 51855 / 37)).